Here is a 269-residue protein sequence, read N- to C-terminus: MLGLQIFTLLSIPTLLYTYELELLDLTRTPPEKELEYWCTYANHCRFCWDCQDGICKNKVFENHSPILENDYIANCSVFRRNEFCTYYVTSIKPHEVYRTECPQQSHEWHEAVIRKWQKLLTYGFYLVGCVLVANYVRKRSLQTVMYLLVLLVIFFLLSQLMLYRELEDKKHKIGSIPPKRELEHWCTHGKYCDFCWDCQNGICRNKVFKNHPPIGENDFIRHDCWTIHLPNRCYYQKIYKYPDYHMMECSQPTPYKWYDNLMKKQDMM.

Residue Met-1 is a topological domain, cytoplasmic. One copy of the A repeat lies at 1–145 (MLGLQIFTLL…YVRKRSLQTV (145 aa)). The chain crosses the membrane as a helical span at residues 2–18 (LGLQIFTLLSIPTLLYT). Topologically, residues 19-116 (YELELLDLTR…HEWHEAVIRK (98 aa)) are extracellular. Asn-75 carries N-linked (GlcNAc...) asparagine; by host glycosylation. A helical membrane pass occupies residues 117–137 (WQKLLTYGFYLVGCVLVANYV). Residues 138 to 144 (RKRSLQT) are Cytoplasmic-facing. Residues 145–165 (VMYLLVLLVIFFLLSQLMLYR) form a helical membrane-spanning segment. The stretch at 147–269 (YLLVLLVIFF…DNLMKKQDMM (123 aa)) is one B repeat. At 166-269 (ELEDKKHKIG…DNLMKKQDMM (104 aa)) the chain is on the extracellular side.

The protein belongs to the asfivirus MGF 110 family.

It localises to the host membrane. Plays a role in virus cell tropism, and may be required for efficient virus replication in macrophages. The protein is Protein MGF 110-1L of African swine fever virus (isolate Tick/South Africa/Pretoriuskop Pr4/1996) (ASFV).